We begin with the raw amino-acid sequence, 371 residues long: UDP-N-acetylglucosamine--N-acetylmuramyl-(pentapeptide) pyrophosphoryl-undecaprenol N-acetylglucosamine transferase (371 aa).

Residues 10-12 (TGG), asparagine 124, arginine 165, serine 191, isoleucine 246, and glutamine 291 contribute to the UDP-N-acetyl-alpha-D-glucosamine site.

It belongs to the glycosyltransferase 28 family. MurG subfamily.

Its subcellular location is the cell inner membrane. It catalyses the reaction di-trans,octa-cis-undecaprenyl diphospho-N-acetyl-alpha-D-muramoyl-L-alanyl-D-glutamyl-meso-2,6-diaminopimeloyl-D-alanyl-D-alanine + UDP-N-acetyl-alpha-D-glucosamine = di-trans,octa-cis-undecaprenyl diphospho-[N-acetyl-alpha-D-glucosaminyl-(1-&gt;4)]-N-acetyl-alpha-D-muramoyl-L-alanyl-D-glutamyl-meso-2,6-diaminopimeloyl-D-alanyl-D-alanine + UDP + H(+). It participates in cell wall biogenesis; peptidoglycan biosynthesis. Its function is as follows. Cell wall formation. Catalyzes the transfer of a GlcNAc subunit on undecaprenyl-pyrophosphoryl-MurNAc-pentapeptide (lipid intermediate I) to form undecaprenyl-pyrophosphoryl-MurNAc-(pentapeptide)GlcNAc (lipid intermediate II). The polypeptide is UDP-N-acetylglucosamine--N-acetylmuramyl-(pentapeptide) pyrophosphoryl-undecaprenol N-acetylglucosamine transferase (Geobacter sp. (strain M21)).